The primary structure comprises 208 residues: Putative archaetidylserine decarboxylase proenzyme (208 aa).

Ser171 functions as the Schiff-base intermediate with substrate; via pyruvic acid in the catalytic mechanism. Residue Ser171 is modified to Pyruvic acid (Ser); by autocatalysis.

Belongs to the phosphatidylserine decarboxylase family. PSD-A subfamily. Heterodimer of a large membrane-associated beta subunit and a small pyruvoyl-containing alpha subunit. It depends on pyruvate as a cofactor. Is synthesized initially as an inactive proenzyme. Formation of the active enzyme involves a self-maturation process in which the active site pyruvoyl group is generated from an internal serine residue via an autocatalytic post-translational modification. Two non-identical subunits are generated from the proenzyme in this reaction, and the pyruvate is formed at the N-terminus of the alpha chain, which is derived from the carboxyl end of the proenzyme. The post-translation cleavage follows an unusual pathway, termed non-hydrolytic serinolysis, in which the side chain hydroxyl group of the serine supplies its oxygen atom to form the C-terminus of the beta chain, while the remainder of the serine residue undergoes an oxidative deamination to produce ammonia and the pyruvoyl prosthetic group on the alpha chain.

It is found in the cell membrane. The catalysed reaction is archaetidylserine + H(+) = archaetidylethanolamine + CO2. Catalyzes the formation of archaetidylethanolamine (PtdEtn) from archaetidylserine (PtdSer). The protein is Putative archaetidylserine decarboxylase proenzyme of Methanococcoides burtonii (strain DSM 6242 / NBRC 107633 / OCM 468 / ACE-M).